A 184-amino-acid chain; its full sequence is UPF0301 protein RHOS4_26140 (184 aa).

It belongs to the UPF0301 (AlgH) family.

The sequence is that of UPF0301 protein RHOS4_26140 from Cereibacter sphaeroides (strain ATCC 17023 / DSM 158 / JCM 6121 / CCUG 31486 / LMG 2827 / NBRC 12203 / NCIMB 8253 / ATH 2.4.1.) (Rhodobacter sphaeroides).